Here is a 417-residue protein sequence, read N- to C-terminus: Histidine--tRNA ligase (417 aa).

This sequence belongs to the class-II aminoacyl-tRNA synthetase family. In terms of assembly, homodimer.

The protein resides in the cytoplasm. It catalyses the reaction tRNA(His) + L-histidine + ATP = L-histidyl-tRNA(His) + AMP + diphosphate + H(+). The sequence is that of Histidine--tRNA ligase from Acetivibrio thermocellus (strain ATCC 27405 / DSM 1237 / JCM 9322 / NBRC 103400 / NCIMB 10682 / NRRL B-4536 / VPI 7372) (Clostridium thermocellum).